We begin with the raw amino-acid sequence, 199 residues long: Large ribosomal subunit protein bL17 (199 aa).

Residues 123-199 form a disordered region; that stretch reads DEANRARRAA…EESEAKDDTK (77 aa). Basic and acidic residues predominate over residues 137–152; sequence KADERADEKADEKAEE. The segment covering 153–199 has biased composition (acidic residues); the sequence is TVEETTEAPAEESTEAAAEETVEETTEAPAEESTEAAEESEAKDDTK.

Belongs to the bacterial ribosomal protein bL17 family. Part of the 50S ribosomal subunit. Contacts protein L32.

The polypeptide is Large ribosomal subunit protein bL17 (Mycolicibacterium smegmatis (strain ATCC 700084 / mc(2)155) (Mycobacterium smegmatis)).